Consider the following 273-residue polypeptide: uncharacterized protein (273 aa).

Residues 7–25 (FFRWAFLIATVYVAYYFLV) traverse the membrane as a helical segment. Disordered stretches follow at residues 34 to 154 (KPQK…LKMK) and 168 to 273 (LHNS…DSLW). A compositionally biased stretch (basic residues) spans 36–54 (QKSKLTKLGKQKQRQKQKN). Residues 55–91 (TKKDTLVNRETPSKKSQKLETSDALKSKSKDSSKKEP) are compositionally biased toward basic and acidic residues. Positions 92–101 (VVVPKKGTPK) are enriched in low complexity. Basic and acidic residues predominate over residues 115 to 144 (PKKEKLVGKNPAEKEDTTDVEDTQKLEQKH). Positions 145-154 (STTPSSLKMK) are enriched in polar residues. Residues 201 to 212 (KRQRQNQQKKLR) show a composition bias toward basic residues. Over residues 213–240 (AKEMQELADEEQRRRLAAHRKELHEANR) the composition is skewed to basic and acidic residues. Polar residues predominate over residues 245-266 (LNNSSRSAYSYINNGQAGSSKG).

It localises to the cytoplasm. Its subcellular location is the membrane. This is an uncharacterized protein from Schizosaccharomyces pombe (strain 972 / ATCC 24843) (Fission yeast).